A 457-amino-acid polypeptide reads, in one-letter code: DDB1- and CUL4-associated factor 10 (457 aa).

WD repeat units follow at residues 65 to 104, 108 to 146, 150 to 189, and 195 to 234; these read RTHG…HIKT, AHED…SKVC, GHTS…EDGC, and FHTR…KSLE. Over residues 246–265 the composition is skewed to low complexity; that stretch reads TASTSDMTSTSSDTRPSSSP. The segment at 246–304 is disordered; that stretch reads TASTSDMTSTSSDTRPSSSPCHNSDLGPLFEKHMSRSSQREGASPRNSLEVLTPEVPGE. The span at 281–292 shows a compositional bias: polar residues; sequence RSSQREGASPRN. WD repeat units follow at residues 306-346, 368-406, and 424-457; these read DRGN…QEGA, VGRG…KELV, and SHKD…QPKF.

It belongs to the WD repeat DCAF10 family.

It participates in protein modification; protein ubiquitination. In terms of biological role, may function as a substrate receptor for CUL4-DDB1 E3 ubiquitin-protein ligase complex. This is DDB1- and CUL4-associated factor 10 (dcaf10) from Xenopus tropicalis (Western clawed frog).